The sequence spans 351 residues: Methylxanthine N1-demethylase NdmA (351 aa).

A Rieske domain is found at 17-125 (WHPVCTVTEL…CEERYGLIWI (109 aa)). [2Fe-2S] cluster-binding residues include cysteine 62, histidine 64, cysteine 81, and histidine 84.

Requires [2Fe-2S] cluster as cofactor.

The catalysed reaction is caffeine + NADH + O2 + H(+) = theobromine + formaldehyde + NAD(+) + H2O. It catalyses the reaction caffeine + NADPH + O2 + H(+) = theobromine + formaldehyde + NADP(+) + H2O. The enzyme catalyses theophylline + NADH + O2 + H(+) = 3-methylxanthine + formaldehyde + NAD(+) + H2O. It carries out the reaction theophylline + NADPH + O2 + H(+) = 3-methylxanthine + formaldehyde + NADP(+) + H2O. The catalysed reaction is 1,7-dimethylxanthine + NADH + O2 + H(+) = 7-methylxanthine + formaldehyde + NAD(+) + H2O. It catalyses the reaction 1,7-dimethylxanthine + NADPH + O2 + H(+) = 7-methylxanthine + formaldehyde + NADP(+) + H2O. It participates in alkaloid degradation. Its function is as follows. Involved in the caffeine degradation, which is the essential first step for assimilating the carbon and nitrogen in caffeine. Catalyzes the N1-demethylation of caffeine to produce theobromine and formaldehyde. Also catalyzes the N1-demethylation of theophylline, paraxanthine, and 1-methylxanthine to 3-methylxanthine, 7-methylxanthine, and xanthine, respectively. NADH is the preferred substrate. This is Methylxanthine N1-demethylase NdmA (ndmA) from Pseudomonas putida (Arthrobacter siderocapsulatus).